A 53-amino-acid polypeptide reads, in one-letter code: Rubredoxin 3 (53 aa).

The Rubredoxin-like domain occupies 1–53 (MQKWVCVPCGYEYDPADGDPENGIEPGTAFEDLPEDWVCPVCGVDKSFFEPVS). Residues C6, C9, C39, and C42 each contribute to the Fe cation site.

The protein belongs to the rubredoxin family. Monomer. The cofactor is Fe(3+).

Its function is as follows. Functions as an electron acceptor for pyruvate ferredoxin oxidoreductase (PFOR). The protein is Rubredoxin 3 (rub3) of Chlorobaculum tepidum (strain ATCC 49652 / DSM 12025 / NBRC 103806 / TLS) (Chlorobium tepidum).